A 100-amino-acid chain; its full sequence is Urease subunit gamma (100 aa).

The protein belongs to the urease gamma subunit family. As to quaternary structure, heterotrimer of UreA (gamma), UreB (beta) and UreC (alpha) subunits. Three heterotrimers associate to form the active enzyme.

It localises to the cytoplasm. It catalyses the reaction urea + 2 H2O + H(+) = hydrogencarbonate + 2 NH4(+). It functions in the pathway nitrogen metabolism; urea degradation; CO(2) and NH(3) from urea (urease route): step 1/1. The protein is Urease subunit gamma of Acinetobacter baumannii (strain SDF).